We begin with the raw amino-acid sequence, 777 residues long: MAGPARFPLTFEDVAIYFSEQEWQHLEAWQKELYKQVMRTNYETLISLDNGLPKPELISWIELGRELFGSWGEKKKPDKETHCSIDDVHVHLAIEEQLLESSQRAVKSEVTCHSQLNPLESRHSFGLAVGERVDASLRHDQGISLVNAQTRCGEAVVSVVHSSSEAAQRKVLSSHRTLALPGLQRVSSWQSTQNSCPVCRENSWEKNHLVKQQKGHSKSRSYRVWKKFSRQADAKQPWSISCLGCGKSFRLKQYLVRHLDIHTRKRPPQCPKCKMCFHHERTLFSHHLKNSSSQHPTCDTSFRTDSSVDLCQQIQERPAFWREDTNVPSRQKPGPSLDCEDCCHMGSKLKGLQCGCILGEDRPHSHTEYGNCFLSQSKQAGLCRTHTGEKASQCPESNKRLCLRGLQNVHQHGLRGEKPVFCRKCGQGFTKHCGLTEHTRILSGEKSFWCAQCGRNFSQKGQLLRHQRLHLEEKPFQCTMCELRFHLKSRLRAHQLQHGGERPFSCSECGRAFTHQCKLREHLRVHSGERPFQCPECHKSFRLKGVLKAHQRIHSKERPFSCGECGKGFIRQSKLTEHFRVHSGERPFQCPECDRRFRLKGQLLSHQRLHTGERPFQCPECGKSYRVKADMKAHQLLHGGQMPFSCQCGKGFAKQSKLVEHMRTHTGEKPFQCPKCDKSFRLKAQLLSHQGLHTGERPFHCPECDKNFREKGHMLRHQRIHRPERPFACGDCGKGFIYKSKLAEHIRVHTKACQVPREPDIKKRLSQLFAMIEADWS.

The region spanning 9 to 80 (LTFEDVAIYF…WGEKKKPDKE (72 aa)) is the KRAB domain. A C2H2-type 1; degenerate zinc finger spans residues 194 to 216 (NSCPVCRENSWEKNHLVKQQKGH). The C2H2-type 2 zinc finger occupies 240–262 (ISCLGCGKSFRLKQYLVRHLDIH). The C2H2-type 3; degenerate zinc finger occupies 268–291 (PQCPKCKMCFHHERTLFSHHLKNS). The C2H2-type 4; degenerate zinc finger occupies 420 to 442 (VFCRKCGQGFTKHCGLTEHTRIL). 11 C2H2-type zinc fingers span residues 448-470 (FWCA…QRLH), 476-498 (FQCT…QLQH), 504-526 (FSCS…LRVH), 532-554 (FQCP…QRIH), 560-582 (FSCG…FRVH), 588-610 (FQCP…QRLH), 616-638 (FQCP…QLLH), 644-665 (FSCQ…MRTH), 671-693 (FQCP…QGLH), 699-721 (FHCP…QRIH), and 727-749 (FACG…IRVH).

It belongs to the krueppel C2H2-type zinc-finger protein family.

The protein localises to the nucleus. Functionally, may be involved in transcriptional regulation. This is Zinc finger protein 786 (Znf786) from Mus musculus (Mouse).